A 30-amino-acid polypeptide reads, in one-letter code: Cytochrome b6-f complex subunit 8 (30 aa).

Residues 4–24 (IISLGWGSLLAIFSFSIALVV) form a helical membrane-spanning segment.

It belongs to the PetN family. The 4 large subunits of the cytochrome b6-f complex are cytochrome b6, subunit IV (17 kDa polypeptide, PetD), cytochrome f and the Rieske protein, while the 4 small subunits are PetG, PetL, PetM and PetN. The complex functions as a dimer.

The protein resides in the plastid. The protein localises to the chloroplast thylakoid membrane. In terms of biological role, component of the cytochrome b6-f complex, which mediates electron transfer between photosystem II (PSII) and photosystem I (PSI), cyclic electron flow around PSI, and state transitions. The polypeptide is Cytochrome b6-f complex subunit 8 (Gracilaria tenuistipitata var. liui (Red alga)).